A 907-amino-acid chain; its full sequence is Protein translocase subunit SecA (907 aa).

Residues glutamine 87, 105–109 (GEGKT), and aspartate 512 contribute to the ATP site. Residues cysteine 891, cysteine 893, cysteine 902, and histidine 903 each coordinate Zn(2+).

It belongs to the SecA family. As to quaternary structure, monomer and homodimer. Part of the essential Sec protein translocation apparatus which comprises SecA, SecYEG and auxiliary proteins SecDF-YajC and YidC. Requires Zn(2+) as cofactor.

The protein resides in the cell inner membrane. Its subcellular location is the cytoplasm. The enzyme catalyses ATP + H2O + cellular proteinSide 1 = ADP + phosphate + cellular proteinSide 2.. Part of the Sec protein translocase complex. Interacts with the SecYEG preprotein conducting channel. Has a central role in coupling the hydrolysis of ATP to the transfer of proteins into and across the cell membrane, serving both as a receptor for the preprotein-SecB complex and as an ATP-driven molecular motor driving the stepwise translocation of polypeptide chains across the membrane. This Tolumonas auensis (strain DSM 9187 / NBRC 110442 / TA 4) protein is Protein translocase subunit SecA.